We begin with the raw amino-acid sequence, 38 residues long: Large ribosomal subunit protein bL36 (38 aa).

It belongs to the bacterial ribosomal protein bL36 family.

The polypeptide is Large ribosomal subunit protein bL36 (Chlorobium phaeobacteroides (strain BS1)).